Reading from the N-terminus, the 25-residue chain is Unknown protein 7 (25 aa).

The tract at residues Met-1–Lys-25 is disordered.

In Pseudotsuga menziesii (Douglas-fir), this protein is Unknown protein 7.